The sequence spans 599 residues: Sulfite reductase [NADPH] flavoprotein alpha-component (599 aa).

The Flavodoxin-like domain occupies 63–201 (ITVISASQTG…LATAWRKQVV (139 aa)). FMN is bound by residues 69–74 (SQTGNA), 116–119 (STQG), and 152–161 (LGDTSYENFC). An FAD-binding FR-type domain is found at 234–448 (EQPLTAQLAV…IEHNDNFRLP (215 aa)). FAD is bound by residues T322, H356, 386–389 (RLYS), 404–406 (TVG), Y410, and 419–422 (GGAS). NADP(+) is bound by residues 519 to 520 (SR), 525 to 529 (KVYVQ), and D561. Y599 is a binding site for FAD.

Belongs to the NADPH-dependent sulphite reductase flavoprotein subunit CysJ family. The protein in the N-terminal section; belongs to the flavodoxin family. It in the C-terminal section; belongs to the flavoprotein pyridine nucleotide cytochrome reductase family. Alpha(8)-beta(8). The alpha component is a flavoprotein, the beta component is a hemoprotein. Requires FAD as cofactor. It depends on FMN as a cofactor.

It catalyses the reaction hydrogen sulfide + 3 NADP(+) + 3 H2O = sulfite + 3 NADPH + 4 H(+). It functions in the pathway sulfur metabolism; hydrogen sulfide biosynthesis; hydrogen sulfide from sulfite (NADPH route): step 1/1. In terms of biological role, component of the sulfite reductase complex that catalyzes the 6-electron reduction of sulfite to sulfide. This is one of several activities required for the biosynthesis of L-cysteine from sulfate. The flavoprotein component catalyzes the electron flow from NADPH -&gt; FAD -&gt; FMN to the hemoprotein component. The sequence is that of Sulfite reductase [NADPH] flavoprotein alpha-component from Serratia proteamaculans (strain 568).